A 505-amino-acid polypeptide reads, in one-letter code: 2,3-bisphosphoglycerate-independent phosphoglycerate mutase (505 aa).

Mn(2+)-binding residues include D12 and S62. The active-site Phosphoserine intermediate is S62. Substrate-binding positions include H123, 153–154 (RD), R185, R191, 257–260 (RPDR), and K330. Residues D397, H401, D438, H439, and H456 each coordinate Mn(2+).

Belongs to the BPG-independent phosphoglycerate mutase family. Monomer. Requires Mn(2+) as cofactor.

It catalyses the reaction (2R)-2-phosphoglycerate = (2R)-3-phosphoglycerate. Its pathway is carbohydrate degradation; glycolysis; pyruvate from D-glyceraldehyde 3-phosphate: step 3/5. Its function is as follows. Catalyzes the interconversion of 2-phosphoglycerate and 3-phosphoglycerate. In Staphylococcus aureus (strain MRSA252), this protein is 2,3-bisphosphoglycerate-independent phosphoglycerate mutase.